A 419-amino-acid polypeptide reads, in one-letter code: Creatine kinase S-type, mitochondrial (419 aa).

Residues 1–39 (MASIFSKLLTGRNASLLFATMGTSVLTTGYLLNRQKVCA) constitute a mitochondrion transit peptide. The interval 40 to 64 (EVREQPRLFPPSADYPDLRKHNNCM) is cardiolipin-binding. One can recognise a Phosphagen kinase N-terminal domain in the interval 46–132 (RLFPPSADYP…FDPVIKLRHN (87 aa)). One can recognise a Phosphagen kinase C-terminal domain in the interval 159 to 401 (YVLSSRVRTG…NYLVDCEKKL (243 aa)). ATP contacts are provided by residues 162–166 (SSRVR) and histidine 225. Phosphotyrosine is present on tyrosine 255. ATP contacts are provided by residues arginine 270, arginine 326, 354–359 (RGTGGV), and aspartate 369. A Phosphothreonine modification is found at threonine 356.

The protein belongs to the ATP:guanido phosphotransferase family. In terms of assembly, exists as an octamer composed of four CKMT2 homodimers. In terms of tissue distribution, sarcomere-specific. Found only in heart and skeletal muscles.

Its subcellular location is the mitochondrion inner membrane. It catalyses the reaction creatine + ATP = N-phosphocreatine + ADP + H(+). In terms of biological role, reversibly catalyzes the transfer of phosphate between ATP and various phosphogens (e.g. creatine phosphate). Creatine kinase isoenzymes play a central role in energy transduction in tissues with large, fluctuating energy demands, such as skeletal muscle, heart, brain and spermatozoa. This Homo sapiens (Human) protein is Creatine kinase S-type, mitochondrial (CKMT2).